A 448-amino-acid chain; its full sequence is Guanine deaminase (448 aa).

Zn(2+)-binding residues include H74 and H76. Residues 76-79, 204-205, 231-234, and D319 contribute to the substrate site; these read HAPQ, RF, and HISE. Zn(2+) contacts are provided by H231 and D319.

The protein belongs to the metallo-dependent hydrolases superfamily. ATZ/TRZ family. It depends on Zn(2+) as a cofactor.

The catalysed reaction is guanine + H2O + H(+) = xanthine + NH4(+). The protein operates within purine metabolism; guanine degradation; xanthine from guanine: step 1/1. Strongly inhibited by p-chloromercuribenzoate (PCMB). Potassium cyanide (KCN) strongly inhibits activity towards 7,8-dihydropterin but has almost no effect on activity towards guanine. Pterin inhibits activity towards guanine but has little effect on activity towards 7,8-dihydropterin. In terms of biological role, catalyzes the hydrolytic deamination of guanine, producing xanthine and ammonia. Also has 7,8-dihydropterin deaminase activity, which plays a role in synthesis of the red eye pigment aurodrosopterin. The chain is Guanine deaminase from Drosophila melanogaster (Fruit fly).